The chain runs to 164 residues: Phosphopantetheine adenylyltransferase (164 aa).

Position 10 (Ser-10) interacts with substrate. Residues 10 to 11 and His-18 each bind ATP; that span reads SF. Residues Lys-42, Met-74, and Arg-88 each contribute to the substrate site. ATP-binding positions include 89-91, Glu-99, and 124-130; these read GLR and YFFVSAR.

Belongs to the bacterial CoaD family. As to quaternary structure, homohexamer. Requires Mg(2+) as cofactor.

Its subcellular location is the cytoplasm. The enzyme catalyses (R)-4'-phosphopantetheine + ATP + H(+) = 3'-dephospho-CoA + diphosphate. The protein operates within cofactor biosynthesis; coenzyme A biosynthesis; CoA from (R)-pantothenate: step 4/5. Reversibly transfers an adenylyl group from ATP to 4'-phosphopantetheine, yielding dephospho-CoA (dPCoA) and pyrophosphate. The chain is Phosphopantetheine adenylyltransferase from Anaeromyxobacter dehalogenans (strain 2CP-1 / ATCC BAA-258).